The sequence spans 434 residues: Pre-mRNA-splicing factor PRP46 (434 aa).

WD repeat units follow at residues 120 to 160 (GHTG…LKIT), 163 to 202 (GHVMSVRDIAISKRHPYMFSASEDKLVKCWDLERNTAIRD), 205 to 244 (GHLSGVHTVDVHPSLDIIATAGRDAVVRLWDIRSRSEIMV), 247 to 288 (GHKS…KVLT), 290 to 329 (HSRNIRDLTLHPAEFSFASVSTNDVRSWKLPEGQLLTNFQ), 331 to 369 (QNTGILNTVSINHDNVLLAGGDDGTLCFYDYKTGHKYQS), and 380 to 419 (ESERSILCSTFDVTGTRLITGEGDKSIKIWKQVPDATEDT).

It belongs to the WD repeat PRL1/PRL2 family. As to quaternary structure, associated with the spliceosome.

The protein resides in the cytoplasm. It localises to the nucleus. Functionally, involved in pre-mRNA splicing and required for cell cycle progression at G2/M. This chain is Pre-mRNA-splicing factor PRP46 (PRP46), found in Kluyveromyces lactis (strain ATCC 8585 / CBS 2359 / DSM 70799 / NBRC 1267 / NRRL Y-1140 / WM37) (Yeast).